Here is an 852-residue protein sequence, read N- to C-terminus: Leucine--tRNA ligase (852 aa).

The 'HIGH' region motif lies at 51-61 (PYPSGDLHMGH). The short motif at 615-619 (KMSKS) is the 'KMSKS' region element. K618 is an ATP binding site.

Belongs to the class-I aminoacyl-tRNA synthetase family.

It is found in the cytoplasm. It catalyses the reaction tRNA(Leu) + L-leucine + ATP = L-leucyl-tRNA(Leu) + AMP + diphosphate. The polypeptide is Leucine--tRNA ligase (Clavibacter sepedonicus (Clavibacter michiganensis subsp. sepedonicus)).